The chain runs to 198 residues: UPF0301 protein BDI_1431 (198 aa).

The protein belongs to the UPF0301 (AlgH) family.

In Parabacteroides distasonis (strain ATCC 8503 / DSM 20701 / CIP 104284 / JCM 5825 / NCTC 11152), this protein is UPF0301 protein BDI_1431.